The sequence spans 387 residues: 3-hydroxy-D-aspartate aldolase (387 aa).

An N6-(pyridoxal phosphate)lysine modification is found at Lys-62. Pyridoxal 5'-phosphate is bound at residue Gln-85. The interval 199 to 228 is disordered; that stretch reads HGQLRGPQGQAGRRHCPGERGRGRAGGRGL. Pyridoxal 5'-phosphate-binding positions include Thr-238, 256–257, and Tyr-265; that span reads GS. His-355 and Asp-357 together coordinate Mg(2+).

It belongs to the DSD1 family. As to quaternary structure, homodimer. Requires pyridoxal 5'-phosphate as cofactor. Mn(2+) serves as cofactor. It depends on Mg(2+) as a cofactor. Co(2+) is required as a cofactor.

It carries out the reaction (3S)-3-hydroxy-D-aspartate = glyoxylate + glycine. The enzyme catalyses (3R)-3-hydroxy-D-aspartate = glyoxylate + glycine. Its function is as follows. Catalyzes the condensation of glyoxylate and glycine into (2R,3S)-beta-hydroxyaspartate ((3S)-3-hydroxy-D-aspartate). Functions in glyoxylate assimilation via the beta-hydroxyaspartate cycle (BHAC). In vitro catalyzes the cleavage of both D-erythro- and D-threo-3-hydroxyaspartate to glycine and glyoxylate. Also acts on D-threonine, D-3-phenylserine and D-3-3,4-methylenedioxyphenylserine. The sequence is that of 3-hydroxy-D-aspartate aldolase (dhaa) from Paracoccus denitrificans.